Reading from the N-terminus, the 343-residue chain is MIKASIIGASGYVGIELIRLLLKHPEVEISSIISSSNKDISIENTNPQFKKILNLTFKEFDIDLVKEADVVFCALPHGVSQEYVKVAYDLGKVVIDLSSDFRYKDLTRYSKDYGNHKYPELLNESSYGLCEIFREEIKSSKIVGNPGCYPTSAILGLAPLLKNKLIQKDSIIIDSKSGVSGAGKKADFAYSFCEVDENFKAYGVAKHRHTSEIEEKCSFLFGEDLNLSFTPHLLPVKRGILSTIYATFTKSLNKNELIEIYKEFYRDEFFIRIYEDSLPELKYVTGTNFVDIGLEVDKKTNRVIVISCIDNLIKGAAGQAIQNMNIKFSLNEKTGLVIVGEYF.

C148 is a catalytic residue.

This sequence belongs to the NAGSA dehydrogenase family. Type 1 subfamily.

Its subcellular location is the cytoplasm. It carries out the reaction N-acetyl-L-glutamate 5-semialdehyde + phosphate + NADP(+) = N-acetyl-L-glutamyl 5-phosphate + NADPH + H(+). Its pathway is amino-acid biosynthesis; L-arginine biosynthesis; N(2)-acetyl-L-ornithine from L-glutamate: step 3/4. Functionally, catalyzes the NADPH-dependent reduction of N-acetyl-5-glutamyl phosphate to yield N-acetyl-L-glutamate 5-semialdehyde. The protein is N-acetyl-gamma-glutamyl-phosphate reductase of Caldicellulosiruptor saccharolyticus (strain ATCC 43494 / DSM 8903 / Tp8T 6331).